Consider the following 82-residue polypeptide: U24 protein (82 aa).

Residues Pro-7 to Tyr-10 carry the PPXY motif motif. The chain crosses the membrane as a helical span at residues Phe-52 to Ile-72.

Interacts with host ITCH; this interaction probably mediates ITCH degradation. Interacts probably with NEDD4.

The protein localises to the membrane. In terms of biological role, down-regulates of the TCR/CD3E complex and the transferrin receptor TFRC in host T-cells by blocking them from recycling back to the cell surface. The chain is U24 protein from Homo sapiens (Human).